A 169-amino-acid polypeptide reads, in one-letter code: Ribosome maturation factor RimM (169 aa).

A PRC barrel domain is found at 94–167 (ENEFYFHEII…KITIEVMEGL (74 aa)).

The protein belongs to the RimM family. Binds ribosomal protein uS19.

The protein localises to the cytoplasm. Its function is as follows. An accessory protein needed during the final step in the assembly of 30S ribosomal subunit, possibly for assembly of the head region. Essential for efficient processing of 16S rRNA. May be needed both before and after RbfA during the maturation of 16S rRNA. It has affinity for free ribosomal 30S subunits but not for 70S ribosomes. In Listeria welshimeri serovar 6b (strain ATCC 35897 / DSM 20650 / CCUG 15529 / CIP 8149 / NCTC 11857 / SLCC 5334 / V8), this protein is Ribosome maturation factor RimM.